We begin with the raw amino-acid sequence, 372 residues long: Septin-1 (372 aa).

Positions 27–301 (KGFDFTLMVA…EGYRARCLQS (275 aa)) constitute a Septin-type G domain. Residues 37-44 (GESGLGKS) form a G1 motif region. Residues 37 to 44 (GESGLGKS), Thr71, Gly97, and 176 to 184 (KADALMPQE) contribute to the GTP site. A G3 motif region spans residues 94–97 (DTPG). The tract at residues 175 to 178 (GKAD) is G4 motif. Residue Ser211 is modified to Phosphoserine. Positions 234 and 250 each coordinate GTP. Ser253 is modified (phosphoserine; by AURKB). Thr256 bears the Phosphothreonine mark. Residues Ser312 and Ser320 each carry the phosphoserine; by AURKB modification. The tract at residues 352–372 (LEKMQAQMQQSQAQGEQSDAL) is disordered. The segment covering 355–372 (MQAQMQQSQAQGEQSDAL) has biased composition (low complexity).

It belongs to the TRAFAC class TrmE-Era-EngA-EngB-Septin-like GTPase superfamily. Septin GTPase family. In terms of assembly, septins polymerize into heterooligomeric protein complexes that form filaments, and can associate with cellular membranes, actin filaments and microtubules. GTPase activity is required for filament formation. Interacts with AURKB. In terms of tissue distribution, expressed at high levels in lymphoid and hematopoietic tissues.

Its subcellular location is the cytoplasm. It is found in the cytoskeleton. The protein localises to the microtubule organizing center. The protein resides in the centrosome. It localises to the midbody. In terms of biological role, filament-forming cytoskeletal GTPase. May play a role in cytokinesis (Potential). The protein is Septin-1 of Homo sapiens (Human).